The chain runs to 232 residues: Cell surface superoxide dismutase [Cu-Zn] 4 (232 aa).

Residues 1–15 (MKYLSIISIVALALA) form the signal peptide. N-linked (GlcNAc...) asparagine glycosylation occurs at asparagine 53. 2 residues coordinate Cu cation: histidine 75 and histidine 77. N-linked (GlcNAc...) asparagine glycosylation occurs at asparagine 86. Histidine 93 is a binding site for Cu cation. Residue histidine 93 coordinates Zn(2+). Residue asparagine 98 is glycosylated (N-linked (GlcNAc...) asparagine). Aspartate 113 contributes to the Zn(2+) binding site. N-linked (GlcNAc...) asparagine glycosylation is present at asparagine 120. Residue histidine 153 coordinates Cu cation. Asparagine 156, asparagine 164, asparagine 182, asparagine 193, and asparagine 196 each carry an N-linked (GlcNAc...) asparagine glycan. Residues 174 to 208 (TASAATWSNSSSSSSSSSKNSTNGSSGSSTSASQG) are compositionally biased toward low complexity. Residues 174-211 (TASAATWSNSSSSSSSSSKNSTNGSSGSSTSASQGSGA) are disordered. Serine 209 carries GPI-anchor amidated serine lipidation. Positions 210 to 232 (GAGRAEISGFLAAGIAGVVAALI) are cleaved as a propeptide — removed in mature form. Arginine 213 is a substrate binding site.

This sequence belongs to the Cu-Zn superoxide dismutase family. The cofactor is Cu cation. It depends on Zn(2+) as a cofactor. The GPI-anchor is attached to the protein in the endoplasmic reticulum and serves to target the protein to the cell surface. There, the glucosamine-inositol phospholipid moiety is cleaved off and the GPI-modified mannoprotein is covalently attached via its lipidless GPI glycan remnant to the 1,6-beta-glucan of the outer cell wall layer.

The protein localises to the secreted. Its subcellular location is the cell wall. It localises to the membrane. It carries out the reaction 2 superoxide + 2 H(+) = H2O2 + O2. Its function is as follows. Superoxide dismutases serve to convert damaging superoxide radicals, a key form of ROS, to less damaging hydrogen peroxide that can be converted into water by catalase action. Degrades host-derived reactive oxygen species to escape innate immune surveillance. Involved in the occurrence of miconazole-tolerant persisters in biofilms. Persisters are cells that survive high doses of an antimicrobial agent. The polypeptide is Cell surface superoxide dismutase [Cu-Zn] 4 (SOD4) (Candida albicans (strain SC5314 / ATCC MYA-2876) (Yeast)).